The sequence spans 478 residues: Ankyrin repeat and BTB/POZ domain-containing protein 1 (478 aa).

ANK repeat units lie at residues 1 to 31 (MDTS…EVNV) and 35 to 64 (WDST…RCEA). 2 consecutive BTB domains span residues 115–182 (SDVV…DIGV) and 272–346 (PDIC…ELPP). The stretch at 450-478 (TVQTYSAIEEAQQQLRALENLLVSIGLDC) forms a coiled coil.

The protein resides in the cytoplasm. Functionally, may act as a mediator of the PTEN growth-suppressive signaling pathway. May play a role in developmental processes. This Rattus norvegicus (Rat) protein is Ankyrin repeat and BTB/POZ domain-containing protein 1.